Here is a 375-residue protein sequence, read N- to C-terminus: B3 domain-containing protein REM-like 2 (375 aa).

DNA-binding regions (TF-B3) lie at residues 51–147, 131–226, and 277–375; these read SFVA…KRLY, FVTV…YGTN, and RLVI…KSGK.

The protein resides in the nucleus. The sequence is that of B3 domain-containing protein REM-like 2 from Arabidopsis thaliana (Mouse-ear cress).